A 210-amino-acid chain; its full sequence is Urease accessory protein UreE (210 aa).

Residues P136–K210 are disordered. Composition is skewed to basic and acidic residues over residues S145–D169 and H178–G196. Basic residues predominate over residues H197 to K210.

Belongs to the UreE family.

It is found in the cytoplasm. In terms of biological role, involved in urease metallocenter assembly. Binds nickel. Probably functions as a nickel donor during metallocenter assembly. This Bradyrhizobium sp. (strain ORS 278) protein is Urease accessory protein UreE.